A 267-amino-acid chain; its full sequence is Ribosomal RNA small subunit methyltransferase A (267 aa).

Asn18, Leu20, Gly45, Glu66, Asp91, and Asn112 together coordinate S-adenosyl-L-methionine.

The protein belongs to the class I-like SAM-binding methyltransferase superfamily. rRNA adenine N(6)-methyltransferase family. RsmA subfamily.

The protein localises to the cytoplasm. The enzyme catalyses adenosine(1518)/adenosine(1519) in 16S rRNA + 4 S-adenosyl-L-methionine = N(6)-dimethyladenosine(1518)/N(6)-dimethyladenosine(1519) in 16S rRNA + 4 S-adenosyl-L-homocysteine + 4 H(+). Specifically dimethylates two adjacent adenosines (A1518 and A1519) in the loop of a conserved hairpin near the 3'-end of 16S rRNA in the 30S particle. May play a critical role in biogenesis of 30S subunits. This Shewanella woodyi (strain ATCC 51908 / MS32) protein is Ribosomal RNA small subunit methyltransferase A.